A 371-amino-acid chain; its full sequence is Probable tRNA sulfurtransferase (371 aa).

In terms of domain architecture, THUMP spans 54-156 (NANIEALSEV…NEMTYFYHKV (103 aa)). ATP contacts are provided by residues 174-175 (LF), 199-200 (NF), Lys-254, Gly-276, and Gln-285.

Belongs to the ThiI family.

It is found in the cytoplasm. The enzyme catalyses [ThiI sulfur-carrier protein]-S-sulfanyl-L-cysteine + a uridine in tRNA + 2 reduced [2Fe-2S]-[ferredoxin] + ATP + H(+) = [ThiI sulfur-carrier protein]-L-cysteine + a 4-thiouridine in tRNA + 2 oxidized [2Fe-2S]-[ferredoxin] + AMP + diphosphate. It carries out the reaction [ThiS sulfur-carrier protein]-C-terminal Gly-Gly-AMP + S-sulfanyl-L-cysteinyl-[cysteine desulfurase] + AH2 = [ThiS sulfur-carrier protein]-C-terminal-Gly-aminoethanethioate + L-cysteinyl-[cysteine desulfurase] + A + AMP + 2 H(+). Its pathway is cofactor biosynthesis; thiamine diphosphate biosynthesis. Its function is as follows. Catalyzes the ATP-dependent transfer of a sulfur to tRNA to produce 4-thiouridine in position 8 of tRNAs, which functions as a near-UV photosensor. Also catalyzes the transfer of sulfur to the sulfur carrier protein ThiS, forming ThiS-thiocarboxylate. This is a step in the synthesis of thiazole, in the thiamine biosynthesis pathway. The sulfur is donated as persulfide by IscS. The chain is Probable tRNA sulfurtransferase from Saccharolobus solfataricus (strain ATCC 35092 / DSM 1617 / JCM 11322 / P2) (Sulfolobus solfataricus).